The following is a 422-amino-acid chain: UDP-N-acetylglucosamine 1-carboxyvinyltransferase (422 aa).

22 to 23 is a phosphoenolpyruvate binding site; the sequence is KN. Residue Arg-93 coordinates UDP-N-acetyl-alpha-D-glucosamine. The Proton donor role is filled by Cys-117. Residue Cys-117 is modified to 2-(S-cysteinyl)pyruvic acid O-phosphothioketal. UDP-N-acetyl-alpha-D-glucosamine contacts are provided by residues 122 to 126, Asp-308, and Leu-330; that span reads RPVDL.

This sequence belongs to the EPSP synthase family. MurA subfamily.

The protein resides in the cytoplasm. The catalysed reaction is phosphoenolpyruvate + UDP-N-acetyl-alpha-D-glucosamine = UDP-N-acetyl-3-O-(1-carboxyvinyl)-alpha-D-glucosamine + phosphate. It participates in cell wall biogenesis; peptidoglycan biosynthesis. In terms of biological role, cell wall formation. Adds enolpyruvyl to UDP-N-acetylglucosamine. In Helicobacter pylori (strain ATCC 700392 / 26695) (Campylobacter pylori), this protein is UDP-N-acetylglucosamine 1-carboxyvinyltransferase.